The chain runs to 405 residues: Serpin I2 (405 aa).

The first 18 residues, 1–18 (MNKTILWSFLLFFSGSQT), serve as a signal peptide directing secretion. A glycan (N-linked (GlcNAc...) asparagine) is linked at N306.

This sequence belongs to the serpin family. In terms of tissue distribution, expressed in pancreas.

The protein localises to the secreted. In Mus musculus (Mouse), this protein is Serpin I2 (Serpini2).